The sequence spans 55 residues: Large ribosomal subunit protein bL33 (55 aa).

This sequence belongs to the bacterial ribosomal protein bL33 family.

The sequence is that of Large ribosomal subunit protein bL33 from Azoarcus sp. (strain BH72).